The chain runs to 391 residues: Probable sugar efflux transporter (391 aa).

The next 12 membrane-spanning stretches (helical) occupy residues 16–36 (VFVFSLSAFIFNTTEFVPVAL), 51–71 (VGLMITAYAWVVSLGSLPLML), 82–102 (LLFLFALFILSHILSALAWNF), 110–130 (MGIAFAHSIFWSITASLVIRV), 138–158 (QALGLLALGSSLAMILGLPLG), 170–190 (TFGVIGGVATLIALLMWKLLP), 210–230 (PLLMGIYLLVIMVISGHFTTY), 247–267 (ITTLMLFVFGLAGVVGSFLFG), 277–297 (FIAFAMVLVICPQLLLFVFKN), 300–320 (WVVFLQIFLWGIGITSLGISL), 338–358 (IYSGSYNVGIGSGALFGSIVI), and 361–381 (LGLGYIGFVGGALGLLALFWL).

Belongs to the major facilitator superfamily. SotB (TC 2.A.1.2) family.

It localises to the cell inner membrane. Functionally, involved in the efflux of sugars. The physiological role may be the reduction of the intracellular concentration of toxic sugars or sugar metabolites. This is Probable sugar efflux transporter from Helicobacter pylori (strain ATCC 700392 / 26695) (Campylobacter pylori).